Reading from the N-terminus, the 305-residue chain is Dihydroorotate dehydrogenase A (fumarate) (305 aa).

Residues Ser21 and Lys45 to Ser46 contribute to the FMN site. Residues Lys45, Asn69–Leu73, and Asn129 contribute to the substrate site. Asn129 is a binding site for FMN. Residue Cys132 is the Nucleophile of the active site. FMN-binding residues include Lys167 and Ile193. Residue Asn194 to Thr195 participates in substrate binding. FMN is bound by residues Gly219 and Gly245–Gly246.

It belongs to the dihydroorotate dehydrogenase family. Type 1 subfamily. In terms of assembly, homodimer. FMN is required as a cofactor.

It localises to the cytoplasm. The enzyme catalyses (S)-dihydroorotate + fumarate = orotate + succinate. It participates in pyrimidine metabolism; UMP biosynthesis via de novo pathway. In terms of biological role, catalyzes the conversion of dihydroorotate to orotate with fumarate as the electron acceptor. The chain is Dihydroorotate dehydrogenase A (fumarate) (pyrD) from Lactiplantibacillus plantarum (strain ATCC BAA-793 / NCIMB 8826 / WCFS1) (Lactobacillus plantarum).